We begin with the raw amino-acid sequence, 382 residues long: Ribosomal RNA large subunit methyltransferase G (382 aa).

Belongs to the methyltransferase superfamily. RlmG family.

It is found in the cytoplasm. The catalysed reaction is guanosine(1835) in 23S rRNA + S-adenosyl-L-methionine = N(2)-methylguanosine(1835) in 23S rRNA + S-adenosyl-L-homocysteine + H(+). In terms of biological role, specifically methylates the guanine in position 1835 (m2G1835) of 23S rRNA. The chain is Ribosomal RNA large subunit methyltransferase G from Aliivibrio fischeri (strain MJ11) (Vibrio fischeri).